The following is a 101-amino-acid chain: Cyanovirin-N (101 aa).

2 disulfide bridges follow: Cys-8–Cys-22 and Cys-58–Cys-73.

Belongs to the cyanovirin-N family. In terms of assembly, in solution exists as a metastable domain-swapped homodimer which very slowly converts into a more stable monomeric form at room temperature. Under physiological conditions it is unlikely that the dimeric species exists and indeed the monomer is more active against HIV. Interacts with HIV-1 gp120. In terms of processing, cleavage, or reduction and alkylation of the disulfide bonds results in the loss of anti-HIV activity.

In terms of biological role, mannose-binding lectin. In Nostoc ellipsosporum, this protein is Cyanovirin-N.